A 222-amino-acid polypeptide reads, in one-letter code: 7-cyano-7-deazaguanine synthase (222 aa).

Position 8–18 (8–18 (LSGGMDSTTLA)) interacts with ATP. The Zn(2+) site is built by C188, C196, C199, and C202.

Belongs to the QueC family. Zn(2+) is required as a cofactor.

It carries out the reaction 7-carboxy-7-deazaguanine + NH4(+) + ATP = 7-cyano-7-deazaguanine + ADP + phosphate + H2O + H(+). It participates in purine metabolism; 7-cyano-7-deazaguanine biosynthesis. Functionally, catalyzes the ATP-dependent conversion of 7-carboxy-7-deazaguanine (CDG) to 7-cyano-7-deazaguanine (preQ(0)). This is 7-cyano-7-deazaguanine synthase from Methanoculleus marisnigri (strain ATCC 35101 / DSM 1498 / JR1).